We begin with the raw amino-acid sequence, 535 residues long: Ribonuclease Y (535 aa).

The helical transmembrane segment at 4–24 (IILLIVSALIGLILGYALISI) threads the bilayer. The tract at residues 118–141 (ENLSSKEKVLDSKEQSLTDKSKHI) is disordered. A KH domain is found at 225 to 285 (TITSVHLPDD…IRREIARMTL (61 aa)). The 94-residue stretch at 351–444 (VLRHSVEVGK…VAAADALSSA (94 aa)) folds into the HD domain.

It belongs to the RNase Y family.

Its subcellular location is the cell membrane. Its function is as follows. Endoribonuclease that initiates mRNA decay. This Streptococcus pyogenes serotype M18 (strain MGAS8232) protein is Ribonuclease Y.